The primary structure comprises 492 residues: UPF0236 protein TTE1650/TTE2708 (492 aa).

This sequence belongs to the UPF0236 family.

The polypeptide is UPF0236 protein TTE1650/TTE2708 (Caldanaerobacter subterraneus subsp. tengcongensis (strain DSM 15242 / JCM 11007 / NBRC 100824 / MB4) (Thermoanaerobacter tengcongensis)).